The sequence spans 729 residues: MEVEDSGGVVLTAYHSHARSQPQGAEPRCASRASHPLSRKSIPRCRRINRMLSNESLHPPSFSRSNSQASVDSSASMEEFLREIESIKESSVGASQEQPPTAAAAAAEVKPVDEGELEAEWLQDVGLSTLISGNEEEDGKALLSTLTRTQAAAVKKRYNTYTQTLRKKNKQPVRDVRDIFGVSESPPSDSCEHATQLDGTKEEKDLPGVTKTSRPLPDDASLSSTTLSNGAQDEEGGFVALQSGSVSILEAIPDIAVHTNGSADAEQSVQSTLSDDDYHGKNVPAEAEELSFEVSYSEMVTEMPDRNKWKKSDIKKEDYVLTKFIIQKTRFGLTETGDLSVEDMKKIRHLSLIELTAFFDAFGIQLKRNKTERVRGRDNGIFGVPLTVLLDNDRKKDPAVKVPLVLQKFFQKVEESGLESEGIFRLSGCTAKVKQYREELDARFNADKFKWDKMCHREAAVMLKAFFRELPTSLFPVEYIPAFISLMERGPDIKVQFQALHLMVMALPDANRDTAQALMAFFNKVIANESKNRMNLWNISTVMAPNLFFSRSKHSDCEELLLANTATHIIRLMLKYQKILWKVPSFLITQVRRMNEATMLLKKQLPSMKKLLRRKTLDREVSILKTSKVPQKSPSSRRMSDVPEGVIRVHAPLLSKVSMAIQLNSQTKAKDILAKFQYENSHGSSEHIKMQNQRLYEVGGNIGQHCLDPDAYILDVYHINPHAEWVIKP.

The tract at residues 1–78 (MEVEDSGGVV…ASVDSSASME (78 aa)) is disordered. Over residues 37 to 49 (LSRKSIPRCRRIN) the composition is skewed to basic residues. Low complexity predominate over residues 63–76 (SRSNSQASVDSSAS). A Phosphoserine modification is found at Ser70. Thr164 carries the post-translational modification Phosphothreonine. The disordered stretch occupies residues 180 to 234 (FGVSESPPSDSCEHATQLDGTKEEKDLPGVTKTSRPLPDDASLSSTTLSNGAQDE). Over residues 221-231 (SLSSTTLSNGA) the composition is skewed to polar residues. The region spanning 384-581 (VPLTVLLDND…LMLKYQKILW (198 aa)) is the Rho-GAP domain.

GTPase activator for the Rho-type GTPases by converting them to an inactive GDP-bound state. This Mus musculus (Mouse) protein is Rho GTPase-activating protein 28 (Arhgap28).